A 55-amino-acid chain; its full sequence is Protein CADMIUM TOLERANCE 1 (55 aa).

A helical transmembrane segment spans residues glycine 24 to tyrosine 40.

The protein belongs to the CYSTM1 family.

It is found in the cell membrane. Its subcellular location is the secreted. The protein localises to the cell wall. Confers resistance to heavy metal ions (e.g. cadmium (CdCl(2)) and copper (CuCl(2))) by chelating them at the plasma membrane of root cells, thus stopping their entry and reducing their accumulation. Binds to aluminium (Al). The sequence is that of Protein CADMIUM TOLERANCE 1 from Oryza sativa subsp. indica (Rice).